The chain runs to 502 residues: MELRAEEISEIIKKQINEYGKEVEVSETGTIISIGDGIARIHGLAGAMAGELLEFPGGVSGMVLNLEEDNVGAAILGEFAEIKEGDTVKRTGRITEVPVGDALVGRVVNAIGQPIDGKGPINSSTFSKVEIKAPGIVARKSVHQPMATGLKAIDSMVPIGRGQRELIIGDRQTGKTAVAVDTIINQKGGDVICIYVAIGQKRSTVAQVVSKLTEHGAMDYTIVVAATASESAPLQFIAPYTGVTMGEYFRDNKKHALIIYDDLSKQAVAYRQLSLLLRRPPGREAYPGDVFYLHSRLLERACKLSDECGAGSLTALPIIETQAGDVSAYIPTNVISITDGQIYLESDLFFSGVRPAINVGLSVSRVGGSAQTKSMKQVAGTLRLNLAQYREMAAFAQFGSDLDKATQMQLARGERLVEILKQPQYRPIPNEKQVLVIFAANNGYLDDYPVSALKKYETELYAFFDNRQADVLTELREKQAIGDDLKAKLVSALDQFKKEFTA.

An ATP-binding site is contributed by 169–176 (GDRQTGKT).

Belongs to the ATPase alpha/beta chains family. F-type ATPases have 2 components, CF(1) - the catalytic core - and CF(0) - the membrane proton channel. CF(1) has five subunits: alpha(3), beta(3), gamma(1), delta(1), epsilon(1). CF(0) has three main subunits: a(1), b(2) and c(9-12). The alpha and beta chains form an alternating ring which encloses part of the gamma chain. CF(1) is attached to CF(0) by a central stalk formed by the gamma and epsilon chains, while a peripheral stalk is formed by the delta and b chains.

The protein resides in the cell inner membrane. The enzyme catalyses ATP + H2O + 4 H(+)(in) = ADP + phosphate + 5 H(+)(out). Produces ATP from ADP in the presence of a proton gradient across the membrane. The alpha chain is a regulatory subunit. The sequence is that of ATP synthase subunit alpha from Trichlorobacter lovleyi (strain ATCC BAA-1151 / DSM 17278 / SZ) (Geobacter lovleyi).